The following is a 142-amino-acid chain: Hemoglobin subunit alpha (142 aa).

Serine 1 is modified (N-acetylserine). Residues 1–142 (SLSDKDKNTV…LALALSERYR (142 aa)) form the Globin domain. Histidine 59 provides a ligand contact to O2. Position 88 (histidine 88) interacts with heme b.

It belongs to the globin family. Heterotetramer of two alpha chains and two beta chains. Can form polymers. In terms of tissue distribution, red blood cells.

Functionally, involved in oxygen transport from gills to the various peripheral tissues. This chain is Hemoglobin subunit alpha (hba), found in Chelidonichthys kumu (Bluefin gurnard).